Here is a 196-residue protein sequence, read N- to C-terminus: Protein Flattop (196 aa).

Residues 107–196 form a disordered region; it reads NGLRPEIFGK…PHAGRNLAEV (90 aa). Basic and acidic residues predominate over residues 113–124; sequence IFGKPHDPDSQK. Low complexity predominate over residues 137–149; the sequence is APSPTIIPSSPAS. A compositionally biased stretch (polar residues) spans 150-162; sequence NLSSPDQLQSSHP.

This sequence belongs to the Flattop family. As to quaternary structure, microtubule inner protein component of sperm flagellar doublet microtubules. Interacts with DLG3. Expressed in trachea multiciliated cells.

The protein localises to the cytoplasm. It is found in the cytoskeleton. It localises to the cilium basal body. Its subcellular location is the cell projection. The protein resides in the cilium. The protein localises to the apical cell membrane. It is found in the cilium axoneme. It localises to the flagellum axoneme. Functionally, microtubule inner protein (MIP) part of the dynein-decorated doublet microtubules (DMTs) in cilia axoneme. Acts as a regulator of cilium basal body docking and positioning in mono- and multiciliated cells. Regulates basal body docking and cilia formation in multiciliated lung cells. Regulates kinocilium positioning and stereocilia bundle morphogenesis in the inner ear. This chain is Protein Flattop, found in Bos taurus (Bovine).